Reading from the N-terminus, the 184-residue chain is NADH-quinone oxidoreductase subunit B (184 aa).

Residues C37, C38, C103, and C132 each contribute to the [4Fe-4S] cluster site.

Belongs to the complex I 20 kDa subunit family. In terms of assembly, NDH-1 is composed of 14 different subunits. Subunits NuoB, C, D, E, F, and G constitute the peripheral sector of the complex. [4Fe-4S] cluster is required as a cofactor.

The protein resides in the cell membrane. The catalysed reaction is a quinone + NADH + 5 H(+)(in) = a quinol + NAD(+) + 4 H(+)(out). NDH-1 shuttles electrons from NADH, via FMN and iron-sulfur (Fe-S) centers, to quinones in the respiratory chain. The immediate electron acceptor for the enzyme in this species is believed to be a menaquinone. Couples the redox reaction to proton translocation (for every two electrons transferred, four hydrogen ions are translocated across the cytoplasmic membrane), and thus conserves the redox energy in a proton gradient. This Mycobacterium sp. (strain JLS) protein is NADH-quinone oxidoreductase subunit B.